We begin with the raw amino-acid sequence, 239 residues long: Purine nucleoside phosphorylase DeoD-type (239 aa).

Residue His5 participates in a purine D-ribonucleoside binding. Residues Gly21, Arg25, Arg44, and 88 to 91 (RIGS) each bind phosphate. A purine D-ribonucleoside-binding positions include 180 to 182 (EME) and 204 to 205 (TD). The active-site Proton donor is the Asp205.

Belongs to the PNP/UDP phosphorylase family. Homohexamer; trimer of homodimers.

The catalysed reaction is a purine D-ribonucleoside + phosphate = a purine nucleobase + alpha-D-ribose 1-phosphate. It carries out the reaction a purine 2'-deoxy-D-ribonucleoside + phosphate = a purine nucleobase + 2-deoxy-alpha-D-ribose 1-phosphate. In terms of biological role, catalyzes the reversible phosphorolytic breakdown of the N-glycosidic bond in the beta-(deoxy)ribonucleoside molecules, with the formation of the corresponding free purine bases and pentose-1-phosphate. This chain is Purine nucleoside phosphorylase DeoD-type, found in Aliivibrio fischeri (strain ATCC 700601 / ES114) (Vibrio fischeri).